Consider the following 470-residue polypeptide: MVELKGTHDTICAIATPVGEGGIGIIKISGPEATAIARRLFMRSGSGSGLESHRLYHGWIKDPVTGQSLDEVLVGTMAAPHTYTREDVVEINCHSGFAVLNRILELVLREGARLADPGEFTRRAFLNGRIDLSQAEAVIEVIRSRSEQGLLLANRLLRGALGEKVRSWREGLLELQSRIEATIDFEDDLDEDALCAVSDRARFVTRLDGELIPALSAALESAERSRALREGVSLVLAGKPNVGKSSLLNALVGRDRAIVTPFPGTTRDVVEDTFLLSGILVRVLDTAGLRHDPDEIESFGIARTIQSLEEADIVLCVMDRSRPLSAEDDAVVEAVASRPFVIVLNKEDLPPAISTGKIRERYGENVPIMAISALRPPDVERLRDFLNQRFLRLPLEQSGSAIVPNLRQRGCIEKALQAMIRARDLISGGGFWELASTELRTARNELDSVLGWNGDDALLDRIFSDFCIGK.

Residues Lys27, Glu90, and Arg129 each contribute to the (6S)-5-formyl-5,6,7,8-tetrahydrofolate site. In terms of domain architecture, TrmE-type G spans 231 to 391 (GVSLVLAGKP…LRDFLNQRFL (161 aa)). GTP is bound by residues 241–246 (NVGKSS), 260–266 (TPFPGTT), and 285–288 (DTAG). Mg(2+) is bound by residues Ser245 and Thr266. Lys470 lines the (6S)-5-formyl-5,6,7,8-tetrahydrofolate pocket.

It belongs to the TRAFAC class TrmE-Era-EngA-EngB-Septin-like GTPase superfamily. TrmE GTPase family. In terms of assembly, homodimer. Heterotetramer of two MnmE and two MnmG subunits. K(+) is required as a cofactor.

It is found in the cytoplasm. Exhibits a very high intrinsic GTPase hydrolysis rate. Involved in the addition of a carboxymethylaminomethyl (cmnm) group at the wobble position (U34) of certain tRNAs, forming tRNA-cmnm(5)s(2)U34. In Syntrophobacter fumaroxidans (strain DSM 10017 / MPOB), this protein is tRNA modification GTPase MnmE.